The following is a 149-amino-acid chain: Small ribosomal subunit protein uS17c (149 aa).

Residues 1–49 (MITSSLTSSLQALKLSSPFAHGSTPLSSLSKPNSFPNHRMPALVPVIRA) constitute a chloroplast transit peptide.

It belongs to the universal ribosomal protein uS17 family. In terms of assembly, part of the 30S ribosomal subunit.

It is found in the plastid. Its subcellular location is the chloroplast. Functionally, one of the primary rRNA binding proteins, it binds specifically to the 5'-end of 16S ribosomal RNA. Required for optimal plastid performance in terms of photosynthesis and growth. Required for the translation of plastid mRNAs. Plays a critical role in biosynthesis of thylakoid membrane proteins encoded by chloroplast genes. This chain is Small ribosomal subunit protein uS17c (RPS17), found in Arabidopsis thaliana (Mouse-ear cress).